A 119-amino-acid polypeptide reads, in one-letter code: MSDYRVTLEAGWTVKDVESVQDAIGIAVSEAGKRLHPSAKFVDVDVMNMPCPYCGKEINTALVIARTGLVGLLLSMKVFKAENPEHAVHIAKSVIGRALRDVSLSTYSVELIEGDEIAE.

Belongs to the UPF0212 family.

This Methanocorpusculum labreanum (strain ATCC 43576 / DSM 4855 / Z) protein is UPF0212 protein Mlab_0931.